Reading from the N-terminus, the 425-residue chain is 2-oxoglutarate and iron-dependent oxygenase JMJD4 homolog (425 aa).

The JmjC domain maps to 165–316 (AAQMPGYNFY…MVWQNLKNNL (152 aa)). Fe cation-binding residues include His212, Asp214, and His284.

The protein belongs to the JMJD6 family. Fe(2+) is required as a cofactor.

It localises to the nucleus. The protein localises to the cytoplasm. The catalysed reaction is L-lysyl-[protein] + 2-oxoglutarate + O2 = 4-hydroxy-L-lysyl-[protein] + succinate + CO2. Catalyzes the 2-oxoglutarate and iron-dependent C4-lysyl hydroxylation of eRF1 thereby promoting the translational termination efficiency of eRF1. May be involved in regulation of chromatin structure, promoting expansion of heterochromatin. This Drosophila melanogaster (Fruit fly) protein is 2-oxoglutarate and iron-dependent oxygenase JMJD4 homolog.